The primary structure comprises 717 residues: UvrABC system protein C (717 aa).

In terms of domain architecture, GIY-YIG spans 16–95; it reads DAPGVYRFHD…IKEYDPRFNV (80 aa). A UVR domain is found at 208–243; sequence DTLIRKLDREMRQASEELEFERAARLRDDLEALRRA. Disordered regions lie at residues 517–555 and 696–717; these read TAAG…GRPR and HAAL…GESQ. 2 stretches are compositionally biased toward basic and acidic residues: residues 541-553 and 707-717; these read EAER…ETGR and ESRDNAEGESQ.

It belongs to the UvrC family. In terms of assembly, interacts with UvrB in an incision complex.

The protein resides in the cytoplasm. Functionally, the UvrABC repair system catalyzes the recognition and processing of DNA lesions. UvrC both incises the 5' and 3' sides of the lesion. The N-terminal half is responsible for the 3' incision and the C-terminal half is responsible for the 5' incision. The sequence is that of UvrABC system protein C from Saccharopolyspora erythraea (strain ATCC 11635 / DSM 40517 / JCM 4748 / NBRC 13426 / NCIMB 8594 / NRRL 2338).